The primary structure comprises 126 residues: uncharacterized protein (126 aa).

A signal peptide spans 1-23 (MLKKLIMGFFLLILLGIAGVAVM).

This is an uncharacterized protein from Archaeoglobus fulgidus (strain ATCC 49558 / DSM 4304 / JCM 9628 / NBRC 100126 / VC-16).